The primary structure comprises 440 residues: SET domain-containing protein 4 (440 aa).

Positions 1-16 (MQKGKGRTSRIRRRKL) are enriched in basic residues. A disordered region spans residues 1–24 (MQKGKGRTSRIRRRKLCGSSESRG). The 226-residue stretch at 48 to 273 (SNLAPACFPG…KHEEVFICYG (226 aa)) folds into the SET domain. Y272 is a binding site for S-adenosyl-L-methionine.

This sequence belongs to the class V-like SAM-binding methyltransferase superfamily. SETD4 family. In terms of assembly, forms a ternary complex with TBK1 and ZNF268; the interaction with TBK1 is ZNF268-dependent and leads to TBK1 monomethylation.

It localises to the cytoplasm. The protein localises to the cytosol. The protein resides in the nucleus. The enzyme catalyses L-lysyl(4)-[histone H3] + S-adenosyl-L-methionine = N(6)-methyl-L-lysyl(4)-[histone H3] + S-adenosyl-L-homocysteine + H(+). It carries out the reaction N(6)-methyl-L-lysyl(4)-[histone H3] + S-adenosyl-L-methionine = N(6),N(6)-dimethyl-L-lysyl(4)-[histone H3] + S-adenosyl-L-homocysteine + H(+). It catalyses the reaction L-lysyl(20)-[histone H4] + S-adenosyl-L-methionine = N(6)-methyl-L-lysyl(20)-[histone H4] + S-adenosyl-L-homocysteine + H(+). The catalysed reaction is N(6)-methyl-L-lysyl(20)-[histone H4] + S-adenosyl-L-methionine = N(6),N(6)-dimethyl-L-lysyl(20)-[histone H4] + S-adenosyl-L-homocysteine + H(+). The enzyme catalyses N(6),N(6)-dimethyl-L-lysyl(20)-[histone H4] + S-adenosyl-L-methionine = N(6),N(6),N(6)-trimethyl-L-lysyl(20)-[histone H4] + S-adenosyl-L-homocysteine + H(+). It carries out the reaction L-lysyl-[protein] + S-adenosyl-L-methionine = N(6)-methyl-L-lysyl-[protein] + S-adenosyl-L-homocysteine + H(+). Functionally, protein-lysine N-methyltransferase that methylates both histones and non-histone proteins. Via its catalytic activity, regulates many processes, including cell proliferation, cell differentiation, inflammatory response and apoptosis. Regulates the inflammatory response by mediating mono- and dimethylation of 'Lys-4' of histone H3 (H3K4me1 and H3K4me2, respectively), leading to activate the transcription of pro-inflammatory cytokines IL6 and TNF-alpha. Through the catalysis of TBK1 monomethylation, may regulate virus-induced interferon signaling. TBK1 monomethylation enhances its interaction with MAVS, STING and IRF3, hence promoting antiviral interferon signaling. Also involved in the regulation of stem cell quiescence by catalyzing the trimethylation of 'Lys-20' of histone H4 (H4K20me3), thereby promoting heterochromatin formation. In the brain, epigenetically controls quiescence of neural stem cells for sustaining a protected neural stem cell population and maintaining a stem cell reservoir for neurogenesis. Involved in proliferation, migration, paracrine and myogenic differentiation of bone marrow mesenchymal stem cells (BMSCs). Through the catalysis of XRCC5/Ku70 trimethylation, regulates BAX-mediated apoptosis. SETD4-catalyzed XRCC5 methylation results in XRCC5 translocation to the cytoplasm, where it interacts with BAX, sequestering it from the mitochondria, hence preventing BAX-mediated apoptosis. In Homo sapiens (Human), this protein is SET domain-containing protein 4.